The chain runs to 263 residues: Endonuclease 8 (263 aa).

Residue Pro-2 is the Schiff-base intermediate with DNA of the active site. Catalysis depends on Glu-3, which acts as the Proton donor. The active-site Proton donor; for beta-elimination activity is Lys-53. 3 residues coordinate DNA: Gln-70, Arg-125, and Asn-169. The FPG-type zinc-finger motif lies at Lys-229–Lys-263. The active-site Proton donor; for delta-elimination activity is the Arg-253.

This sequence belongs to the FPG family. Requires Zn(2+) as cofactor.

It catalyses the reaction 2'-deoxyribonucleotide-(2'-deoxyribose 5'-phosphate)-2'-deoxyribonucleotide-DNA = a 3'-end 2'-deoxyribonucleotide-(2,3-dehydro-2,3-deoxyribose 5'-phosphate)-DNA + a 5'-end 5'-phospho-2'-deoxyribonucleoside-DNA + H(+). Its function is as follows. Involved in base excision repair of DNA damaged by oxidation or by mutagenic agents. Acts as a DNA glycosylase that recognizes and removes damaged bases. Has a preference for oxidized pyrimidines, such as thymine glycol, 5,6-dihydrouracil and 5,6-dihydrothymine. Has AP (apurinic/apyrimidinic) lyase activity and introduces nicks in the DNA strand. Cleaves the DNA backbone by beta-delta elimination to generate a single-strand break at the site of the removed base with both 3'- and 5'-phosphates. The polypeptide is Endonuclease 8 (Salmonella heidelberg (strain SL476)).